A 132-amino-acid chain; its full sequence is ATP synthase epsilon chain (132 aa).

The protein belongs to the ATPase epsilon chain family. As to quaternary structure, F-type ATPases have 2 components, CF(1) - the catalytic core - and CF(0) - the membrane proton channel. CF(1) has five subunits: alpha(3), beta(3), gamma(1), delta(1), epsilon(1). CF(0) has three main subunits: a, b and c.

Its subcellular location is the cell membrane. Produces ATP from ADP in the presence of a proton gradient across the membrane. In Desulfitobacterium hafniense (strain DSM 10664 / DCB-2), this protein is ATP synthase epsilon chain.